A 116-amino-acid polypeptide reads, in one-letter code: MRHKHGYRKLGRTSSHRKALLKNLAIALIEHNKIETGIYKAKELRSYIEKLTTAARVGDFNAHRHVFAYLQNKEATHKLVTEIAPKYAQRNGGYTRIQRTTFRRGDASTLATIEFV.

The protein belongs to the bacterial ribosomal protein bL17 family. As to quaternary structure, part of the 50S ribosomal subunit. Contacts protein L32.

The sequence is that of Large ribosomal subunit protein bL17 from Helicobacter pylori (strain P12).